The chain runs to 422 residues: Leucine-rich repeat protein 1 (422 aa).

LRR repeat units follow at residues 184 to 207, 209 to 230, 233 to 258, 260 to 279, 280 to 301, and 304 to 327; these read LKNL…IGDL, HLQE…LCTS, QKSL…QFRE, TNLN…IGQL, TNLR…EFKM, and LEYL…KLQV.

In terms of assembly, component of the probable ECS(LRR1) E3 ubiquitin-protein ligase complex which contains CUL2, RBX1, Elongin BC complex and LRR1. Interacts with CUL2, RBX1, ELOB and ELOC.

It localises to the nucleus. The protein operates within protein modification; protein ubiquitination. In terms of biological role, substrate recognition subunit of an ECS (Elongin BC-CUL2/5-SOCS-box protein) E3 ubiquitin-protein ligase complex which mediates the ubiquitination and subsequent proteasomal degradation of target proteins. ECS(LRR1) ubiquitinates MCM7 and promotes CMG replisome disassembly by VCP and chromatin extraction during S-phase. May negatively regulate the 4-1BB-mediated signaling cascades which result in the activation of NK-kappaB and JNK1. This chain is Leucine-rich repeat protein 1, found in Mus musculus (Mouse).